The chain runs to 294 residues: Homoserine kinase (294 aa).

84–94 (PFSRGLGSSSA) is a binding site for ATP.

Belongs to the GHMP kinase family. Homoserine kinase subfamily.

It localises to the cytoplasm. The enzyme catalyses L-homoserine + ATP = O-phospho-L-homoserine + ADP + H(+). The protein operates within amino-acid biosynthesis; L-threonine biosynthesis; L-threonine from L-aspartate: step 4/5. Catalyzes the ATP-dependent phosphorylation of L-homoserine to L-homoserine phosphate. The sequence is that of Homoserine kinase from Campylobacter concisus (strain 13826).